The sequence spans 195 residues: Calcineurin B homologous protein 1 (195 aa).

Gly2 carries the N-myristoyl glycine lipid modification. Residues 2-6 carry the Necessary for association with microtubule and interaction with GAPDH motif; it reads GSRAS. EF-hand domains lie at 26-61, 66-101, 110-145, and 151-186; these read SQIT…AINP, IINA…KSKD, SRSN…MVGV, and QLGS…VDVE. Ca(2+) contacts are provided by Asp123, Asp125, Asp127, Lys129, and Glu134. The short motif at 138 to 147 is the Nuclear export signal 1 element; sequence VLRMMVGVNI. The interval 143–185 is necessary for nuclear export signal; the sequence is VGVNISDEQLGSIADRTIQEADQDGDSAISFTEFVKVLEKVDV. Positions 164, 166, 168, and 175 each coordinate Ca(2+). The Nuclear export signal 2 signature appears at 176 to 185; that stretch reads FVKVLEKVDV.

This sequence belongs to the calcineurin regulatory subunit family. CHP subfamily. As to quaternary structure, monomer. Interacts with STK17B; the interaction occurs in a calcium-independent manner and induces the translocation of CHP1 from the Golgi to the nucleus. Interacts with GAPDH; the interaction is direct, occurs in a N-myristoylation-dependent manner and facilitates the ability of CHP1 to bind microtubules. Interacts with KIF1B (via the C-terminal end of the kinesin-motor domain); the interaction occurs in a calcium-dependent manner. Associates (via C-terminal domain) with microtubules; the association occurs with polymerized microtubules during the cell cycle in a myristoylation- and calcium-independent manner and is enhanced by GAPDH. Interacts with PPP3CA. Interacts with SLC9A1/NHE1 (via the C-terminal domain); the interaction occurs at the plasma membrane in a calcium-dependent manner and at a domain that is critical for growth factor stimulation of the exchanger. Interacts with SLC9A3; increases SLC9A3 trafficking and activity at the plasma membrane. Phosphorylated; decreased phosphorylation is associated with an increase in SLC9A1/NHE1 Na(+)/H(+) exchange activity. Phosphorylation occurs in serum-dependent manner. The phosphorylation state may regulate the binding to SLC9A1/NHE1. Post-translationally, both N-myristoylation and calcium-mediated conformational changes are essential for its function in exocytic traffic. N-myristoylation is required for its association with microtubules and interaction with GAPDH, but not for the constitutive association to membranes. Ubiquitously expressed. Has been found in fetal eye, lung, liver, muscle, heart, kidney, thymus and spleen.

Its subcellular location is the nucleus. It is found in the cytoplasm. It localises to the cytoskeleton. The protein localises to the endomembrane system. The protein resides in the endoplasmic reticulum-Golgi intermediate compartment. Its subcellular location is the endoplasmic reticulum. It is found in the cell membrane. It localises to the membrane. Functionally, calcium-binding protein involved in different processes such as regulation of vesicular trafficking, plasma membrane Na(+)/H(+) exchanger and gene transcription. Involved in the constitutive exocytic membrane traffic. Mediates the association between microtubules and membrane-bound organelles of the endoplasmic reticulum and Golgi apparatus and is also required for the targeting and fusion of transcytotic vesicles (TCV) with the plasma membrane. Functions as an integral cofactor in cell pH regulation by controlling plasma membrane-type Na(+)/H(+) exchange activity. Affects the pH sensitivity of SLC9A1/NHE1 by increasing its sensitivity at acidic pH. Required for the stabilization and localization of SLC9A1/NHE1 at the plasma membrane. Inhibits serum- and GTPase-stimulated Na(+)/H(+) exchange. Plays a role as an inhibitor of ribosomal RNA transcription by repressing the nucleolar UBF1 transcriptional activity. May sequester UBF1 in the nucleoplasm and limit its translocation to the nucleolus. Associates to the ribosomal gene promoter. Acts as a negative regulator of the calcineurin/NFAT signaling pathway. Inhibits NFAT nuclear translocation and transcriptional activity by suppressing the calcium-dependent calcineurin phosphatase activity. Also negatively regulates the kinase activity of the apoptosis-induced kinase STK17B. Inhibits both STK17B auto- and substrate-phosphorylations in a calcium-dependent manner. This chain is Calcineurin B homologous protein 1 (CHP1), found in Homo sapiens (Human).